A 270-amino-acid polypeptide reads, in one-letter code: Sec-independent protein translocase protein TatC (270 aa).

Transmembrane regions (helical) follow at residues 35–55, 93–113, 124–144, 176–196, 209–229, and 231–251; these read LILS…YRVQ, AFWA…WAFI, WGLP…VFGY, VVTF…AVIL, QGWR…TPTP, and PANM…GVVL.

It belongs to the TatC family. In terms of assembly, forms a complex with TatA.

The protein resides in the cell membrane. In terms of biological role, part of the twin-arginine translocation (Tat) system that transports large folded proteins containing a characteristic twin-arginine motif in their signal peptide across membranes. The protein is Sec-independent protein translocase protein TatC of Deinococcus radiodurans (strain ATCC 13939 / DSM 20539 / JCM 16871 / CCUG 27074 / LMG 4051 / NBRC 15346 / NCIMB 9279 / VKM B-1422 / R1).